Reading from the N-terminus, the 430-residue chain is Trigger factor (430 aa).

Residues 163–248 (GNIAIIDFKG…IKDIKVKELP (86 aa)) form the PPIase FKBP-type domain.

It belongs to the FKBP-type PPIase family. Tig subfamily.

It is found in the cytoplasm. The enzyme catalyses [protein]-peptidylproline (omega=180) = [protein]-peptidylproline (omega=0). Involved in protein export. Acts as a chaperone by maintaining the newly synthesized protein in an open conformation. Functions as a peptidyl-prolyl cis-trans isomerase. This chain is Trigger factor, found in Clostridium botulinum (strain Okra / Type B1).